The following is a 778-amino-acid chain: Endonuclease MutS2 (778 aa).

Position 328–335 (328–335) interacts with ATP; that stretch reads GPNTGGKT. The Smr domain maps to 702 to 777; that stretch reads LDLRGKRYEE…GSGATIVTFK (76 aa).

It belongs to the DNA mismatch repair MutS family. MutS2 subfamily. As to quaternary structure, homodimer. Binds to stalled ribosomes, contacting rRNA.

Endonuclease that is involved in the suppression of homologous recombination and thus may have a key role in the control of bacterial genetic diversity. Functionally, acts as a ribosome collision sensor, splitting the ribosome into its 2 subunits. Detects stalled/collided 70S ribosomes which it binds and splits by an ATP-hydrolysis driven conformational change. Acts upstream of the ribosome quality control system (RQC), a ribosome-associated complex that mediates the extraction of incompletely synthesized nascent chains from stalled ribosomes and their subsequent degradation. Probably generates substrates for RQC. In Streptococcus pneumoniae (strain CGSP14), this protein is Endonuclease MutS2.